A 500-amino-acid chain; its full sequence is MEFIAKKADIATLSTQCVVVFCKDGKLMASASHLDTEQHGLLTHQLSIKAISPTAGSHLWLTLAPTKSAKHSKALLVQLGESKKKSADITIEDIRKISQKLASTLNSAKLKDAAVFFDSALPASGDCTLEKLAHTLALEIERASYRFSLKAGTKNTPATLKKVVFVATNSAETKTLRNGANTGSAMGKGINAARELGNLPGNICTPNYLAEQAKQLAAGCKKLTSKALGEKQMERLGMGAFLSVSKGSDQEGKLILLEYKGAAANKAPHVLVGKGVTFDTGGISLKPGANMDEMKFDMCGAASVLGTFKALVELDAKVNVVGIIAAAENMPSGGASKPGDVVTSMSGQTIEILNTDAEGRLVLCDALTYAERYKPKSVVDIATLTGACVVALGNHAAGLYSNTQSVADALLKAGEETHDRAWQMPLWDDYQRQLDSNFADMGNIGGMPGGSITAACFLSRYTKKYPWAHLDIAGVAWHSGAKKGATGRPVSLLVNYLLNN.

Residues Lys274 and Asp279 each contribute to the Mn(2+) site. Lys286 is a catalytic residue. Residues Asp297, Asp356, and Glu358 each coordinate Mn(2+). Arg360 is a catalytic residue.

It belongs to the peptidase M17 family. Mn(2+) is required as a cofactor.

It is found in the cytoplasm. It catalyses the reaction Release of an N-terminal amino acid, Xaa-|-Yaa-, in which Xaa is preferably Leu, but may be other amino acids including Pro although not Arg or Lys, and Yaa may be Pro. Amino acid amides and methyl esters are also readily hydrolyzed, but rates on arylamides are exceedingly low.. It carries out the reaction Release of an N-terminal amino acid, preferentially leucine, but not glutamic or aspartic acids.. In terms of biological role, presumably involved in the processing and regular turnover of intracellular proteins. Catalyzes the removal of unsubstituted N-terminal amino acids from various peptides. The polypeptide is Probable cytosol aminopeptidase (Saccharophagus degradans (strain 2-40 / ATCC 43961 / DSM 17024)).